Reading from the N-terminus, the 223-residue chain is Pyridoxine/pyridoxamine 5'-phosphate oxidase (223 aa).

Substrate-binding positions include 8–11 and Lys-65; that span reads RVDY. Residues 60 to 65, 75 to 76, Arg-81, Lys-82, and Gln-104 contribute to the FMN site; these read RTVLLK and YT. Substrate contacts are provided by Tyr-122, Arg-126, and Ser-130. FMN contacts are provided by residues 139–140 and Trp-188; that span reads QS. 194–196 is a binding site for substrate; the sequence is RLH. Arg-198 is an FMN binding site.

This sequence belongs to the pyridoxamine 5'-phosphate oxidase family. In terms of assembly, homodimer. Requires FMN as cofactor.

The enzyme catalyses pyridoxamine 5'-phosphate + O2 + H2O = pyridoxal 5'-phosphate + H2O2 + NH4(+). It carries out the reaction pyridoxine 5'-phosphate + O2 = pyridoxal 5'-phosphate + H2O2. The protein operates within cofactor metabolism; pyridoxal 5'-phosphate salvage; pyridoxal 5'-phosphate from pyridoxamine 5'-phosphate: step 1/1. It participates in cofactor metabolism; pyridoxal 5'-phosphate salvage; pyridoxal 5'-phosphate from pyridoxine 5'-phosphate: step 1/1. In terms of biological role, catalyzes the oxidation of either pyridoxine 5'-phosphate (PNP) or pyridoxamine 5'-phosphate (PMP) into pyridoxal 5'-phosphate (PLP). This is Pyridoxine/pyridoxamine 5'-phosphate oxidase from Kineococcus radiotolerans (strain ATCC BAA-149 / DSM 14245 / SRS30216).